A 433-amino-acid polypeptide reads, in one-letter code: Eukaryotic translation initiation factor 3 subunit E (433 aa).

The PCI domain occupies 217–390 (FFNHGKGRDL…GHVVMGTQPL (174 aa)).

It belongs to the eIF-3 subunit E family. In terms of assembly, component of the eukaryotic translation initiation factor 3 (eIF-3) complex.

It localises to the cytoplasm. Its function is as follows. Component of the eukaryotic translation initiation factor 3 (eIF-3) complex, which is involved in protein synthesis of a specialized repertoire of mRNAs and, together with other initiation factors, stimulates binding of mRNA and methionyl-tRNAi to the 40S ribosome. The eIF-3 complex specifically targets and initiates translation of a subset of mRNAs involved in cell proliferation. This Anopheles gambiae (African malaria mosquito) protein is Eukaryotic translation initiation factor 3 subunit E (eIF3-S6).